Reading from the N-terminus, the 683-residue chain is Acyl-CoA synthetase short-chain family member 3, mitochondrial (683 aa).

A mitochondrion-targeting transit peptide spans 1–29 (MKPSWLQCRKVTGAGTLGAPLPGSPSVRG). 223–226 (EPGR) lines the CoA pocket. ATP-binding positions include 421-423 (GER) and 442-447 (DHWWQT). An N6-succinyllysine modification is found at lysine 514. Lysine 520 carries the post-translational modification N6-acetyllysine. The ATP site is built by aspartate 535, arginine 550, and arginine 561. Residue arginine 620 participates in CoA binding.

This sequence belongs to the ATP-dependent AMP-binding enzyme family. As to expression, expressed in a wide range of tissues, with the highest levels observed in the liver followed by kidney.

The protein resides in the mitochondrion matrix. The catalysed reaction is acetate + ATP + CoA = acetyl-CoA + AMP + diphosphate. The enzyme catalyses propanoate + ATP + CoA = propanoyl-CoA + AMP + diphosphate. It catalyses the reaction butanoate + ATP + CoA = butanoyl-CoA + AMP + diphosphate. Catalyzes the synthesis of acetyl-CoA from short-chain fatty acids. Propionate is the preferred substrate but can also utilize acetate and butyrate with a much lower affinity. This is Acyl-CoA synthetase short-chain family member 3, mitochondrial (Acss3) from Rattus norvegicus (Rat).